We begin with the raw amino-acid sequence, 145 residues long: MASLSMASVNVSFCHPLRSSSPKVSLRSSVHFATSLSSSHSISGLRAVLPLKISTVASPNSQKLHSFTVFAHKGYKMKTHKASAKRFRVTGRGKIVRRRSGKQHLLAKKNNKRKLRLSKMTEVNRSDYDNVIGALPYLKVNRKAT.

A chloroplast-targeting transit peptide spans 1–56 (MASLSMASVNVSFCHPLRSSSPKVSLRSSVHFATSLSSSHSISGLRAVLPLKISTV).

This sequence belongs to the bacterial ribosomal protein bL35 family. As to quaternary structure, part of the 50S ribosomal subunit.

The protein resides in the plastid. It is found in the chloroplast. This is Large ribosomal subunit protein bL35c from Arabidopsis thaliana (Mouse-ear cress).